Reading from the N-terminus, the 319-residue chain is ATP-dependent 6-phosphofructokinase (319 aa).

Gly-11 is a binding site for ATP. 21-25 serves as a coordination point for ADP; the sequence is RAVVR. ATP-binding positions include 72–73 and 102–105; these read RC and GDGS. Residue Asp-103 coordinates Mg(2+). 125-127 contacts substrate; it reads TID. Asp-127 functions as the Proton acceptor in the catalytic mechanism. Position 154 (Arg-154) interacts with ADP. Residues Arg-162 and 169–171 contribute to the substrate site; that span reads MGR. Residues 185–187, Arg-211, and 213–215 contribute to the ADP site; these read GAE and KKH. Substrate-binding positions include Glu-222, Arg-243, and 249–252; that span reads HVQR.

This sequence belongs to the phosphofructokinase type A (PFKA) family. ATP-dependent PFK group I subfamily. Prokaryotic clade 'B1' sub-subfamily. Homotetramer. Mg(2+) is required as a cofactor.

The protein localises to the cytoplasm. The catalysed reaction is beta-D-fructose 6-phosphate + ATP = beta-D-fructose 1,6-bisphosphate + ADP + H(+). It participates in carbohydrate degradation; glycolysis; D-glyceraldehyde 3-phosphate and glycerone phosphate from D-glucose: step 3/4. Allosterically activated by ADP and other diphosphonucleosides, and allosterically inhibited by phosphoenolpyruvate. Functionally, catalyzes the phosphorylation of D-fructose 6-phosphate to fructose 1,6-bisphosphate by ATP, the first committing step of glycolysis. This Geobacillus kaustophilus (strain HTA426) protein is ATP-dependent 6-phosphofructokinase.